A 244-amino-acid polypeptide reads, in one-letter code: Sortase B (244 aa).

Over 1–6 (MRMKRF) the chain is Cytoplasmic. The helical transmembrane segment at 7-24 (LTIVQILLVVIIIIFGYK) threads the bilayer. Residues 25-244 (IVQTYIEDKQ…VVVAKIIKVS (220 aa)) lie on the Extracellular side of the membrane. C223 (acyl-thioester intermediate) is an active-site residue.

Belongs to the bacterial sortase family. Class B subfamily.

It localises to the cell membrane. It carries out the reaction The enzyme catalyzes a cell wall sorting reaction in which a surface protein with a sorting signal containing a NPXTN motif is cleaved between the Thr and Asn residue. The resulting threonine carboxyl end of the protein is covalently attached to a pentaglycine cross-bridge of peptidoglycan.. Inhibited by MTSET (2-(Trimethylammonium)-ethyl-methanethiosulfonate) and E64 ([n- (l-3-trans-carboxyoxirane-2-carbonyl)-l-leucyl]-amido(4-guanido)butane). Inhibited by coptisine. In terms of biological role, transpeptidase that anchors surface proteins to the cell wall. Recognizes and modifies its substrate by proteolytic cleavage of a C-terminal sorting signal. Following cleavage, a covalent intermediate is formed via a thioester bond between the sortase and its substrate, which is then transferred and covalently attached to the cell wall. This sortase recognizes an Asn-Pro-Gln-Thr-Asn (NPQTN) motif in IsdC, which is cleaved by the sortase between the threonine and aspargine residues; may only have 1 substrate in this bacterium. May be dedicated to the process of iron acquisition during bacterial infection. This Staphylococcus aureus (strain NCTC 8325 / PS 47) protein is Sortase B.